The chain runs to 268 residues: L-aspartate dehydrogenase (268 aa).

NAD(+) is bound by residues Ala125 and Asn191. Residue His221 is part of the active site.

The protein belongs to the L-aspartate dehydrogenase family.

It catalyses the reaction L-aspartate + NADP(+) + H2O = oxaloacetate + NH4(+) + NADPH + H(+). The enzyme catalyses L-aspartate + NAD(+) + H2O = oxaloacetate + NH4(+) + NADH + H(+). The protein operates within cofactor biosynthesis; NAD(+) biosynthesis; iminoaspartate from L-aspartate (dehydrogenase route): step 1/1. In terms of biological role, specifically catalyzes the NAD or NADP-dependent dehydrogenation of L-aspartate to iminoaspartate. The polypeptide is L-aspartate dehydrogenase (Brucella anthropi (strain ATCC 49188 / DSM 6882 / CCUG 24695 / JCM 21032 / LMG 3331 / NBRC 15819 / NCTC 12168 / Alc 37) (Ochrobactrum anthropi)).